The following is a 349-amino-acid chain: Peroxidase 23 (349 aa).

The signal sequence occupies residues M1–A29. Q30 is modified (pyrrolidone carboxylic acid). 4 disulfides stabilise this stretch: C40/C120, C73/C78, C126/C329, and C206/C238. Catalysis depends on H71, which acts as the Proton acceptor. Ca(2+)-binding residues include D72, V75, G77, D79, and S81. An N-linked (GlcNAc...) asparagine glycan is attached at N86. P168 lines the substrate pocket. H199 contacts heme b. T200 is a Ca(2+) binding site. Residues N217 and N243 are each glycosylated (N-linked (GlcNAc...) asparagine). Residues D251, T254, and D259 each coordinate Ca(2+).

It belongs to the peroxidase family. Classical plant (class III) peroxidase subfamily. Heme b serves as cofactor. Requires Ca(2+) as cofactor.

The protein resides in the secreted. It localises to the vacuole. It catalyses the reaction 2 a phenolic donor + H2O2 = 2 a phenolic radical donor + 2 H2O. In terms of biological role, removal of H(2)O(2), oxidation of toxic reductants, biosynthesis and degradation of lignin, suberization, auxin catabolism, response to environmental stresses such as wounding, pathogen attack and oxidative stress. These functions might be dependent on each isozyme/isoform in each plant tissue. The chain is Peroxidase 23 (PER23) from Arabidopsis thaliana (Mouse-ear cress).